The sequence spans 450 residues: Tubulin alpha-3E chain (450 aa).

The short motif at 1 to 4 (MREC) is the MREC motif element. Residue glutamine 11 participates in GTP binding. Lysine 40 is subject to N6-acetyllysine. Residues glutamate 71, serine 140, glycine 144, threonine 145, threonine 179, asparagine 206, and asparagine 228 each coordinate GTP. A Mg(2+)-binding site is contributed by glutamate 71. Residue glutamate 254 is part of the active site. The residue at position 282 (tyrosine 282) is a 3'-nitrotyrosine. Serine 439 carries the post-translational modification Phosphoserine. Residue tyrosine 450 is modified to 3'-nitrotyrosine.

Belongs to the tubulin family. Dimer of alpha and beta chains. A typical microtubule is a hollow water-filled tube with an outer diameter of 25 nm and an inner diameter of 15 nM. Alpha-beta heterodimers associate head-to-tail to form protofilaments running lengthwise along the microtubule wall with the beta-tubulin subunit facing the microtubule plus end conferring a structural polarity. Microtubules usually have 13 protofilaments but different protofilament numbers can be found in some organisms and specialized cells. Requires Mg(2+) as cofactor. In terms of processing, some glutamate residues at the C-terminus are polyglutamylated, resulting in polyglutamate chains on the gamma-carboxyl group. Polyglutamylation plays a key role in microtubule severing by spastin (SPAST). SPAST preferentially recognizes and acts on microtubules decorated with short polyglutamate tails: severing activity by SPAST increases as the number of glutamates per tubulin rises from one to eight, but decreases beyond this glutamylation threshold. Glutamylation is also involved in cilia motility. Some glutamate residues at the C-terminus are monoglycylated but not polyglycylated due to the absence of functional TTLL10 in human. Monoglycylation is mainly limited to tubulin incorporated into cilia and flagella axonemes, which is required for their stability and maintenance. Flagella glycylation controls sperm motility. Both polyglutamylation and monoglycylation can coexist on the same protein on adjacent residues, and lowering glycylation levels increases polyglutamylation, and reciprocally. Post-translationally, acetylation of alpha chains at Lys-40 is located inside the microtubule lumen. This modification has been correlated with increased microtubule stability, intracellular transport and ciliary assembly. In terms of processing, methylation of alpha chains at Lys-40 is found in mitotic microtubules and is required for normal mitosis and cytokinesis contributing to genomic stability. Nitration of Tyr-450 is irreversible and interferes with normal dynein intracellular distribution. Post-translationally, undergoes a tyrosination/detyrosination cycle, the cyclic removal and re-addition of a C-terminal tyrosine residue by the enzymes tubulin tyrosine carboxypeptidase (MATCAP1/KIAA0895L, VASH1 or VASH2) and tubulin tyrosine ligase (TTL), respectively. In terms of processing, tyrosination promotes microtubule interaction with CAP-Gly domain-containing proteins such as CLIP1, CLIP2 and DCTN1. Tyrosination regulates the initiation of dynein-dynactin motility via interaction with DCTN1, which brings the dynein-dynactin complex into contact with microtubules. In neurons, tyrosinated tubulins mediate the initiation of retrograde vesicle transport. Detyrosination is involved in metaphase plate congression by guiding chromosomes during mitosis: detyrosination promotes interaction with CENPE, promoting pole-proximal transport of chromosomes toward the equator. Detyrosination increases microtubules-dependent mechanotransduction in dystrophic cardiac and skeletal muscle. In cardiomyocytes, detyrosinated microtubules are required to resist to contractile compression during contraction: detyrosination promotes association with desmin (DES) at force-generating sarcomeres, leading to buckled microtubules and mechanical resistance to contraction.

The protein localises to the cytoplasm. It localises to the cytoskeleton. It carries out the reaction GTP + H2O = GDP + phosphate + H(+). In terms of biological role, tubulin is the major constituent of microtubules, a cylinder consisting of laterally associated linear protofilaments composed of alpha- and beta-tubulin heterodimers. Microtubules grow by the addition of GTP-tubulin dimers to the microtubule end, where a stabilizing cap forms. Below the cap, tubulin dimers are in GDP-bound state, owing to GTPase activity of alpha-tubulin. The chain is Tubulin alpha-3E chain (TUBA3E) from Homo sapiens (Human).